Consider the following 497-residue polypeptide: NAD(P)H-quinone oxidoreductase chain 4, chloroplastic (497 aa).

Helical transmembrane passes span 4–24, 35–55, 87–107, 113–133, 134–154, 167–187, 207–227, 242–262, 274–294, 313–333, 386–406, 416–436, and 462–482; these read LPWL…IPLF, YTLG…CCHF, MGLI…AWPV, LFHF…ASQD, ILLF…LLSI, FILY…TIGL, IALE…KLPI, HYST…YGLI, AIFA…ASLI, MGFV…GAIL, LALP…GIVI, IVIT…LLSM, and IFIS…PNLV.

This sequence belongs to the complex I subunit 4 family.

The protein localises to the plastid. It is found in the chloroplast thylakoid membrane. It carries out the reaction a plastoquinone + NADH + (n+1) H(+)(in) = a plastoquinol + NAD(+) + n H(+)(out). The catalysed reaction is a plastoquinone + NADPH + (n+1) H(+)(in) = a plastoquinol + NADP(+) + n H(+)(out). The sequence is that of NAD(P)H-quinone oxidoreductase chain 4, chloroplastic from Angiopteris evecta (Mule's foot fern).